The primary structure comprises 188 residues: Elongation factor P (188 aa).

The protein belongs to the elongation factor P family.

It localises to the cytoplasm. It participates in protein biosynthesis; polypeptide chain elongation. In terms of biological role, involved in peptide bond synthesis. Stimulates efficient translation and peptide-bond synthesis on native or reconstituted 70S ribosomes in vitro. Probably functions indirectly by altering the affinity of the ribosome for aminoacyl-tRNA, thus increasing their reactivity as acceptors for peptidyl transferase. This is Elongation factor P from Rhodopseudomonas palustris (strain ATCC BAA-98 / CGA009).